A 147-amino-acid chain; its full sequence is Phospholipase A2 inhibitor subunit A (147 aa).

The region spanning Glu62 to Phe143 is the C-type lectin domain. 2 cysteine pairs are disulfide-bonded: Cys64–Cys141 and Cys119–Cys133. N-linked (GlcNAc...) asparagine glycosylation is present at Asn103.

It belongs to the alpha-type phospholipase A2 inhibitor family. In terms of assembly, homo- or heterotrimer; homotrimer of PLI-A chains, two PLI-A and one PLI-B chains, one PLI-A and two PLI-B chains, and homotrimer of PLI-B chains (with a ratio of 1:3:3:1). In terms of tissue distribution, expressed by the liver.

It localises to the secreted. PLI binds directly phospholipase A2 in the presence or absence of calcium. Inhibitory activity of the PLI-A homotrimer is more specific than that of the PLI-B homotrimer. The protein is Phospholipase A2 inhibitor subunit A of Protobothrops flavoviridis (Habu).